Consider the following 968-residue polypeptide: Putative pectinesterase/pectinesterase inhibitor 26 (968 aa).

A helical transmembrane segment spans residues 33-53 (IGISVAVLVAIIISSTVTIAI). A pectinesterase inhibitor 26 A region spans residues 71–230 (LTPAASLKTV…TEFTSNSLAI (160 aa)). N-linked (GlcNAc...) asparagine glycosylation is found at Asn-101, Asn-158, Asn-219, Asn-295, Asn-352, Asn-400, Asn-464, Asn-541, Asn-559, and Asn-603. A pectinesterase inhibitor 26 B region spans residues 265-430 (LTPAASLRNV…RKFTSNSLAI (166 aa)). The pectinesterase inhibitor 26 C stretch occupies residues 453-614 (PTPSSVLRTV…TEFTSNSLAI (162 aa)). The tract at residues 660–954 (HVTVAADGSG…FTVKYFLRGD (295 aa)) is pectinesterase 26. Thr-735 lines the substrate pocket. Asn-737 is a glycosylation site (N-linked (GlcNAc...) asparagine). A substrate-binding site is contributed by Gln-765. Asp-788 serves as the catalytic Proton donor; for pectinesterase activity. A disulfide bond links Cys-802 and Cys-822. The active-site Nucleophile; for pectinesterase activity is Asp-809. Asn-863 carries N-linked (GlcNAc...) asparagine glycosylation. Positions 872 and 874 each coordinate substrate. An N-linked (GlcNAc...) asparagine glycan is attached at Asn-900.

It in the N-terminal section; belongs to the PMEI family. The protein in the C-terminal section; belongs to the pectinesterase family. In terms of tissue distribution, expressed in flowers.

It is found in the membrane. It carries out the reaction [(1-&gt;4)-alpha-D-galacturonosyl methyl ester](n) + n H2O = [(1-&gt;4)-alpha-D-galacturonosyl](n) + n methanol + n H(+). Its pathway is glycan metabolism; pectin degradation; 2-dehydro-3-deoxy-D-gluconate from pectin: step 1/5. Its function is as follows. Acts in the modification of cell walls via demethylesterification of cell wall pectin. The polypeptide is Putative pectinesterase/pectinesterase inhibitor 26 (PME26) (Arabidopsis thaliana (Mouse-ear cress)).